Here is a 455-residue protein sequence, read N- to C-terminus: La-related protein 6C (455 aa).

Positions Met-1–Asp-20 are enriched in basic and acidic residues. The interval Met-1–Gln-29 is disordered. Residues Asn-138–Asp-229 enclose the HTH La-type RNA-binding domain. Residues Arg-236–Arg-324 enclose the RRM domain. Disordered regions lie at residues Ser-348–Gly-396 and Ser-414–Leu-455.

It is found in the nucleus. Transcriptional regulator. This Arabidopsis thaliana (Mouse-ear cress) protein is La-related protein 6C (LARP6C).